A 202-amino-acid polypeptide reads, in one-letter code: MEHYISLFVRAVFIENMALAFFLGMCTFIAISKKVETAIGLGIAVIVVQTITVPANNLIYTYLLKSGALAWAGLPEVDLSFLGLLSYIGVIAAIVQILEMTLDKYVPSLYNALGVFLPLITVNCAIMGGTLFMVERDYNLGESVVYGMGSGLSWALAIALLAGIREKLKYSDVPDGLQGLGITFITIGLMSLGFMSFSGVQL.

The next 6 membrane-spanning stretches (helical) occupy residues 11–31 (AVFI…FIAI), 35–55 (VETA…TVPA), 79–99 (LSFL…QILE), 114–134 (GVFL…LFMV), 144–164 (VVYG…LAGI), and 180–200 (LGIT…FSGV).

The protein belongs to the NqrDE/RnfAE family. As to quaternary structure, composed of six subunits; NqrA, NqrB, NqrC, NqrD, NqrE and NqrF.

The protein localises to the cell inner membrane. The catalysed reaction is a ubiquinone + n Na(+)(in) + NADH + H(+) = a ubiquinol + n Na(+)(out) + NAD(+). Functionally, NQR complex catalyzes the reduction of ubiquinone-1 to ubiquinol by two successive reactions, coupled with the transport of Na(+) ions from the cytoplasm to the periplasm. NqrA to NqrE are probably involved in the second step, the conversion of ubisemiquinone to ubiquinol. The protein is Na(+)-translocating NADH-quinone reductase subunit E of Stutzerimonas stutzeri (strain A1501) (Pseudomonas stutzeri).